A 95-amino-acid chain; its full sequence is Co-chaperonin GroES (95 aa).

Belongs to the GroES chaperonin family. Heptamer of 7 subunits arranged in a ring. Interacts with the chaperonin GroEL.

It is found in the cytoplasm. Functionally, together with the chaperonin GroEL, plays an essential role in assisting protein folding. The GroEL-GroES system forms a nano-cage that allows encapsulation of the non-native substrate proteins and provides a physical environment optimized to promote and accelerate protein folding. GroES binds to the apical surface of the GroEL ring, thereby capping the opening of the GroEL channel. This is Co-chaperonin GroES from Bordetella avium (strain 197N).